The chain runs to 511 residues: Bifunctional purine biosynthesis protein PurH (511 aa).

The MGS-like domain maps to methionine 1–threonine 147.

Belongs to the PurH family.

It carries out the reaction (6R)-10-formyltetrahydrofolate + 5-amino-1-(5-phospho-beta-D-ribosyl)imidazole-4-carboxamide = 5-formamido-1-(5-phospho-D-ribosyl)imidazole-4-carboxamide + (6S)-5,6,7,8-tetrahydrofolate. The enzyme catalyses IMP + H2O = 5-formamido-1-(5-phospho-D-ribosyl)imidazole-4-carboxamide. Its pathway is purine metabolism; IMP biosynthesis via de novo pathway; 5-formamido-1-(5-phospho-D-ribosyl)imidazole-4-carboxamide from 5-amino-1-(5-phospho-D-ribosyl)imidazole-4-carboxamide (10-formyl THF route): step 1/1. It functions in the pathway purine metabolism; IMP biosynthesis via de novo pathway; IMP from 5-formamido-1-(5-phospho-D-ribosyl)imidazole-4-carboxamide: step 1/1. The polypeptide is Bifunctional purine biosynthesis protein PurH (Leptospira borgpetersenii serovar Hardjo-bovis (strain JB197)).